We begin with the raw amino-acid sequence, 187 residues long: Large ribosomal subunit protein uL5 (187 aa).

The protein belongs to the universal ribosomal protein uL5 family. Part of the 50S ribosomal subunit; part of the 5S rRNA/L5/L18/L25 subcomplex. Contacts the 5S rRNA and the P site tRNA. Forms a bridge to the 30S subunit in the 70S ribosome.

This is one of the proteins that bind and probably mediate the attachment of the 5S RNA into the large ribosomal subunit, where it forms part of the central protuberance. In the 70S ribosome it contacts protein S13 of the 30S subunit (bridge B1b), connecting the 2 subunits; this bridge is implicated in subunit movement. Contacts the P site tRNA; the 5S rRNA and some of its associated proteins might help stabilize positioning of ribosome-bound tRNAs. The protein is Large ribosomal subunit protein uL5 of Brachyspira hyodysenteriae (strain ATCC 49526 / WA1).